The sequence spans 346 residues: Dihydroorotase (346 aa).

Residues His13 and His15 each contribute to the Zn(2+) site. Residues His15–Arg17 and Asn41 contribute to the substrate site. Zn(2+) is bound by residues Lys99, His136, and His174. Lys99 is subject to N6-carboxylysine. His136 serves as a coordination point for substrate. Leu219 is a substrate binding site. Asp247 contributes to the Zn(2+) binding site. Asp247 is a catalytic residue. Residues His251 and Ala263 each coordinate substrate.

This sequence belongs to the metallo-dependent hydrolases superfamily. DHOase family. Class II DHOase subfamily. Homodimer. Zn(2+) serves as cofactor.

The enzyme catalyses (S)-dihydroorotate + H2O = N-carbamoyl-L-aspartate + H(+). The protein operates within pyrimidine metabolism; UMP biosynthesis via de novo pathway; (S)-dihydroorotate from bicarbonate: step 3/3. Its function is as follows. Catalyzes the reversible cyclization of carbamoyl aspartate to dihydroorotate. The protein is Dihydroorotase of Picosynechococcus sp. (strain ATCC 27264 / PCC 7002 / PR-6) (Agmenellum quadruplicatum).